We begin with the raw amino-acid sequence, 220 residues long: GILT-like protein CBG03282 (220 aa).

An N-terminal signal peptide occupies residues 1 to 22 (MTIIRTLFVYYSFLFILVLCSS). Asn-131 carries an N-linked (GlcNAc...) asparagine glycan.

The protein belongs to the GILT family.

Its subcellular location is the secreted. The sequence is that of GILT-like protein CBG03282 from Caenorhabditis briggsae.